A 358-amino-acid polypeptide reads, in one-letter code: Hydroxyproline O-arabinosyltransferase 2 (358 aa).

The chain crosses the membrane as a helical; Signal-anchor span at residues 7-26 (YFFPILMTLSLFLIIRYNYI).

In terms of tissue distribution, ubiquitous.

Its subcellular location is the golgi apparatus. It is found in the cis-Golgi network membrane. The catalysed reaction is trans-4-hydroxy-L-prolyl-[protein] + UDP-beta-L-arabinofuranose = O-(beta-L-arabinofuranosyl)-trans-4-hydroxy-L-prolyl-[protein] + UDP + H(+). Its function is as follows. Glycosyltransferase involved in the O-arabinosylation of several proteins including extensins and small signaling peptides. Catalyzes the transfer of the initial L-arabinose to the hydroxyl group of Hyp residues. Contributes redundantly with HPAT1 and HPAT3 to arabinosylation of EXT3. The sequence is that of Hydroxyproline O-arabinosyltransferase 2 from Arabidopsis thaliana (Mouse-ear cress).